The primary structure comprises 92 residues: Small ribosomal subunit protein bS20 (92 aa).

Positions 1–23 are disordered; that stretch reads MANTTSAKKATRKIARRTDVNKA.

The protein belongs to the bacterial ribosomal protein bS20 family.

Binds directly to 16S ribosomal RNA. The sequence is that of Small ribosomal subunit protein bS20 from Rhizobium etli (strain CIAT 652).